A 170-amino-acid chain; its full sequence is MKTQRDGPSLGRWSLVLLLLGLVMPLAIVAQVLSYQEAVLRAIEGINQRSSDANLYRLLDLDPRPTMDGDPDTPKPVSFTVKETVCPRTTQKSPEDCDFKEDGLVKRCVGTVTLNQARDSFDISCDKDNRRFARLGKFFRKVKKKIGGGLKKIGQKIKDFLGNLVPRTAS.

An N-terminal signal peptide occupies residues 1–30 (MKTQRDGPSLGRWSLVLLLLGLVMPLAIVA). Residues 31 to 131 (QVLSYQEAVL…DISCDKDNRR (101 aa)) constitute a propeptide, cathelin-like domain (CLD). 2 cysteine pairs are disulfide-bonded: Cys86–Cys97 and Cys108–Cys125. The segment at 150-162 (LKKIGQKIKDFLG) is active core.

Belongs to the cathelicidin family. In terms of assembly, monomer, homodimer or homotrimer (in vitro). Oligomerizes as tetra- or hexamer in solution (in vitro). Post-translationally, proteolytically cleaved by proteinase PRTN3 into antibacterial peptide LL-37. Proteolytically cleaved by cathepsin CTSG and neutrophil elastase ELANE. In terms of processing, resistant to proteolytic degradation in solution, and when bound to both zwitterionic (mimicking mammalian membranes) and negatively charged membranes (mimicking bacterial membranes). After secretion onto the skin surface, the CAMP gene product is processed by a serine protease-dependent mechanism into multiple novel antimicrobial peptides distinct from and shorter than cathelicidin LL-37. These peptides show enhanced antimicrobial action, acquiring the ability to kill skin pathogens such as S.aureus, E.coli and C.albicans. These peptides have lost the ability to stimulate CXCL8/IL8 release from keratinocytes. The peptides act synergistically, killing bacteria at lower concentrations when present together, and maintain activity at increased salt condition.

Its subcellular location is the secreted. It localises to the vesicle. Antimicrobial protein that is an integral component of the innate immune system. Binds to bacterial lipopolysaccharides (LPS). Acts via neutrophil N-formyl peptide receptors to enhance the release of CXCL2. Postsecretory processing generates multiple cathelicidin antimicrobial peptides with various lengths which act as a topical antimicrobial defense in sweat on skin. The unprocessed precursor form, cathelicidin antimicrobial peptide, inhibits the growth of Gram-negative E.coli and E.aerogenes with efficiencies comparable to that of the mature peptide LL-37 (in vitro). Its function is as follows. Antimicrobial peptide that is an integral component of the innate immune system. Binds to bacterial lipopolysaccharides (LPS). Causes membrane permeabilization by forming transmembrane pores (in vitro). Causes lysis of E.coli. Exhibits antimicrobial activity against Gram-negative bacteria such as P.aeruginosa, S.typhimurium, E.aerogenes, E.coli and P.syringae, Gram-positive bacteria such as L.monocytogenes, S.epidermidis, S.pyogenes and S.aureus, as well as vancomycin-resistant enterococci (in vitro). Exhibits antimicrobial activity against methicillin-resistant S.aureus, P.mirabilis, and C.albicans in low-salt media, but not in media containing 100 mM NaCl (in vitro). Forms chiral supramolecular assemblies with quinolone signal (PQS) molecules of P.aeruginosa, which may lead to interference of bacterial quorum signaling and perturbance of bacterial biofilm formation. May form supramolecular fiber-like assemblies on bacterial membranes. Induces cytokine and chemokine producation as well as TNF/TNFA and CSF2/GMCSF production in normal human keratinocytes. Exhibits hemolytic activity against red blood cells. Functionally, exhibits antimicrobial activity against E.coli and B.megaterium (in vitro). This Chlorocebus aethiops (Green monkey) protein is Cathelicidin antimicrobial peptide.